Reading from the N-terminus, the 175-residue chain is Pre-mRNA-splicing factor SNT309 (175 aa).

In terms of assembly, belongs to the NTC complex (or PRP19-associated complex), composed of at least CEF1, CLF1, ISY1, NTC20, SNT309, SYF1, SYF2, and PRP19. The NTC complex associates with the spliceosome after the release of the U1 and U4 snRNAs and forms the CWC spliceosome subcomplex (or CEF1-associated complex) reminiscent of a late-stage spliceosome composed also of the U2, U5 and U6 snRNAs and at least BUD13, BUD31, BRR2, CDC40, CUS1, CWC2, CWC15, CWC21, CWC22, CWC23, CWC24, CWC25, CWC27, ECM2, HSH155, IST3, LEA1, MSL1, PRP8, PRP9, PRP11, PRP21, PRP22, PRP45, PRP46, SLU7, SMB1, SMD1, SMD2, SMD3, SMX2, SMX3, SNU114, SPP2, RSE1 and YJU2. Interacts with PRP19.

It is found in the nucleus. Functionally, involved in pre-mRNA splicing by stabilizing the NTC (or PRP19-associated complex). As a component of the NTC complex, associates to the spliceosome to mediate conformational rearrangement or to stabilize the structure of the spliceosome after U4 snRNA dissociation, which leads to spliceosome maturation. This Saccharomyces cerevisiae (strain ATCC 204508 / S288c) (Baker's yeast) protein is Pre-mRNA-splicing factor SNT309 (SNT309).